The primary structure comprises 513 residues: ATP synthase subunit alpha (513 aa).

169–176 is a binding site for ATP; that stretch reads GDRQTGKT.

The protein belongs to the ATPase alpha/beta chains family. In terms of assembly, F-type ATPases have 2 components, CF(1) - the catalytic core - and CF(0) - the membrane proton channel. CF(1) has five subunits: alpha(3), beta(3), gamma(1), delta(1), epsilon(1). CF(0) has three main subunits: a(1), b(2) and c(9-12). The alpha and beta chains form an alternating ring which encloses part of the gamma chain. CF(1) is attached to CF(0) by a central stalk formed by the gamma and epsilon chains, while a peripheral stalk is formed by the delta and b chains.

It is found in the cell inner membrane. It catalyses the reaction ATP + H2O + 4 H(+)(in) = ADP + phosphate + 5 H(+)(out). Functionally, produces ATP from ADP in the presence of a proton gradient across the membrane. The alpha chain is a regulatory subunit. The protein is ATP synthase subunit alpha of Cupriavidus pinatubonensis (strain JMP 134 / LMG 1197) (Cupriavidus necator (strain JMP 134)).